A 275-amino-acid chain; its full sequence is Chemotaxis protein methyltransferase Cher2 (275 aa).

One can recognise a CheR-type methyltransferase domain in the interval 1–275 (MSTGNLDFEQ…CSPGIIYQAK (275 aa)). S-adenosyl-L-methionine is bound by residues asparagine 73, threonine 75, arginine 79, glutamate 116, aspartate 145, 201–202 (NL), and 218–219 (RN).

Monomer.

The catalysed reaction is L-glutamyl-[protein] + S-adenosyl-L-methionine = [protein]-L-glutamate 5-O-methyl ester + S-adenosyl-L-homocysteine. Functionally, methylation of the membrane-bound methyl-accepting chemotaxis proteins (MCP) to form gamma-glutamyl methyl ester residues in MCP. Methylates the McpS chemotaxis receptor. The polypeptide is Chemotaxis protein methyltransferase Cher2 (cheR2) (Pseudomonas putida (strain ATCC 47054 / DSM 6125 / CFBP 8728 / NCIMB 11950 / KT2440)).